A 273-amino-acid chain; its full sequence is NAD-dependent protein deacylase (273 aa).

The Deacetylase sirtuin-type domain maps to 20–272; that stretch reads RERLRQRIFF…PEFVEKLLEG (253 aa). 48–67 is a binding site for NAD(+); that stretch reads GAGISAESGIRTFRAADGLW. Residues Tyr92 and Arg95 each contribute to the substrate site. Residue 129–132 coordinates NAD(+); the sequence is QNID. The active-site Proton acceptor is His147. Residues Cys155 and Cys174 each contribute to the Zn(2+) site. NAD(+) is bound by residues 214 to 216, 240 to 242, and Ala258; these read GTS and NLE.

This sequence belongs to the sirtuin family. Class III subfamily. It depends on Zn(2+) as a cofactor.

The protein localises to the cytoplasm. The enzyme catalyses N(6)-acetyl-L-lysyl-[protein] + NAD(+) + H2O = 2''-O-acetyl-ADP-D-ribose + nicotinamide + L-lysyl-[protein]. The catalysed reaction is N(6)-succinyl-L-lysyl-[protein] + NAD(+) + H2O = 2''-O-succinyl-ADP-D-ribose + nicotinamide + L-lysyl-[protein]. It catalyses the reaction N(6)-(2-hydroxyisobutanoyl)-L-lysyl-[protein] + NAD(+) + H2O = 2''-O-(2-hydroxyisobutanoyl)-ADP-D-ribose + nicotinamide + L-lysyl-[protein]. In terms of biological role, NAD-dependent lysine deacetylase that specifically removes acetyl groups on target proteins. Also acts as a protein-lysine deacylase by mediating protein desuccinylation and de-2-hydroxyisobutyrylation. Modulates the activities of several proteins which are inactive in their acylated form. The sequence is that of NAD-dependent protein deacylase from Shigella flexneri.